Reading from the N-terminus, the 368-residue chain is 4-hydroxy-3-methylbut-2-en-1-yl diphosphate synthase (flavodoxin) (368 aa).

The [4Fe-4S] cluster site is built by Cys271, Cys274, Cys306, and Glu313.

The protein belongs to the IspG family. Requires [4Fe-4S] cluster as cofactor.

The enzyme catalyses (2E)-4-hydroxy-3-methylbut-2-enyl diphosphate + oxidized [flavodoxin] + H2O + 2 H(+) = 2-C-methyl-D-erythritol 2,4-cyclic diphosphate + reduced [flavodoxin]. The protein operates within isoprenoid biosynthesis; isopentenyl diphosphate biosynthesis via DXP pathway; isopentenyl diphosphate from 1-deoxy-D-xylulose 5-phosphate: step 5/6. Its function is as follows. Converts 2C-methyl-D-erythritol 2,4-cyclodiphosphate (ME-2,4cPP) into 1-hydroxy-2-methyl-2-(E)-butenyl 4-diphosphate. This Haemophilus influenzae (strain ATCC 51907 / DSM 11121 / KW20 / Rd) protein is 4-hydroxy-3-methylbut-2-en-1-yl diphosphate synthase (flavodoxin).